A 97-amino-acid chain; its full sequence is uncharacterized protein (97 aa).

This is an uncharacterized protein from Mycobacterium tuberculosis (strain CDC 1551 / Oshkosh).